Reading from the N-terminus, the 218-residue chain is Cytochrome b6 (218 aa).

The helical transmembrane segment at 35–55 (IFYCLGGITLVCFLIQFATGF) threads the bilayer. Residue C38 coordinates heme c. Heme b contacts are provided by H89 and H103. 3 helical membrane-spanning segments follow: residues 93–113 (ASMM…TGGF), 119–139 (LTWV…VTGY), and 189–209 (LHTF…FLMI). 2 residues coordinate heme b: H190 and H205.

The protein belongs to the cytochrome b family. PetB subfamily. In terms of assembly, the 4 large subunits of the cytochrome b6-f complex are cytochrome b6, subunit IV (17 kDa polypeptide, PetD), cytochrome f and the Rieske protein, while the 4 small subunits are PetG, PetL, PetM and PetN. The complex functions as a dimer. Heme b is required as a cofactor. Heme c serves as cofactor.

The protein localises to the cellular thylakoid membrane. Component of the cytochrome b6-f complex, which mediates electron transfer between photosystem II (PSII) and photosystem I (PSI), cyclic electron flow around PSI, and state transitions. The chain is Cytochrome b6 from Prochlorococcus marinus (strain MIT 9211).